Consider the following 172-residue polypeptide: Adenine phosphoribosyltransferase (172 aa).

Belongs to the purine/pyrimidine phosphoribosyltransferase family. In terms of assembly, homodimer.

The protein resides in the cytoplasm. It carries out the reaction AMP + diphosphate = 5-phospho-alpha-D-ribose 1-diphosphate + adenine. It participates in purine metabolism; AMP biosynthesis via salvage pathway; AMP from adenine: step 1/1. Functionally, catalyzes a salvage reaction resulting in the formation of AMP, that is energically less costly than de novo synthesis. This Latilactobacillus sakei subsp. sakei (strain 23K) (Lactobacillus sakei subsp. sakei) protein is Adenine phosphoribosyltransferase.